The following is a 485-amino-acid chain: Glutamyl-tRNA(Gln) amidotransferase subunit A (485 aa).

Catalysis depends on charge relay system residues Lys74 and Ser149. Ser173 serves as the catalytic Acyl-ester intermediate.

It belongs to the amidase family. GatA subfamily. Heterotrimer of A, B and C subunits.

It catalyses the reaction L-glutamyl-tRNA(Gln) + L-glutamine + ATP + H2O = L-glutaminyl-tRNA(Gln) + L-glutamate + ADP + phosphate + H(+). Its function is as follows. Allows the formation of correctly charged Gln-tRNA(Gln) through the transamidation of misacylated Glu-tRNA(Gln) in organisms which lack glutaminyl-tRNA synthetase. The reaction takes place in the presence of glutamine and ATP through an activated gamma-phospho-Glu-tRNA(Gln). The protein is Glutamyl-tRNA(Gln) amidotransferase subunit A of Synechococcus sp. (strain RCC307).